The chain runs to 511 residues: Cobyric acid synthase (511 aa).

Residues 251 to 443 (LLDIAIICLP…IHGIFDNDIF (193 aa)) form the GATase cobBQ-type domain. Cys-332 acts as the Nucleophile in catalysis. The active site involves His-435.

Belongs to the CobB/CobQ family. CobQ subfamily.

The protein operates within cofactor biosynthesis; adenosylcobalamin biosynthesis. Catalyzes amidations at positions B, D, E, and G on adenosylcobyrinic A,C-diamide. NH(2) groups are provided by glutamine, and one molecule of ATP is hydrogenolyzed for each amidation. The protein is Cobyric acid synthase of Listeria welshimeri serovar 6b (strain ATCC 35897 / DSM 20650 / CCUG 15529 / CIP 8149 / NCTC 11857 / SLCC 5334 / V8).